The primary structure comprises 739 residues: Homeobox protein SIX5 (739 aa).

3 stretches are compositionally biased toward low complexity: residues 1–24, 34–61, and 74–83; these read MATL…AAAA, QLLQ…AAGA, and PEAASEPPTG. 4 disordered regions span residues 1–84, 251–294, 361–381, and 617–650; these read MATL…PTGL, NRRQ…AAPV, LTGG…SETK, and LSAQ…FPAP. The segment at residues 201–260 is a DNA-binding region (homeobox); that stretch reads GEETVYCFKERSRAALKACYRGNRYPTPDEKRRLATLTGLSLTQVSNWFKNRRQRDRTGA. The span at 279-289 shows a compositional bias: basic and acidic residues; the sequence is ESSRSPEDLER. A compositionally biased stretch (low complexity) spans 617–646; that stretch reads LSAQQPPPAAATTSSTSLPFSPDSPGLLPN.

This sequence belongs to the SIX/Sine oculis homeobox family. Probably binds DNA dimer. Interacts with EYA3, and probably EYA1 and EYA2. As to expression, expressed in adult but not in fetal eyes. Found in corneal epithelium and endothelium, lens epithelium, ciliary body epithelia, cellular layers of the retina and the sclera.

The protein resides in the cytoplasm. It is found in the nucleus. In terms of biological role, transcription factor that is thought to be involved in regulation of organogenesis. May be involved in determination and maintenance of retina formation. Binds a 5'-GGTGTCAG-3' motif present in the ARE regulatory element of ATP1A1. Binds a 5'-TCA[AG][AG]TTNC-3' motif present in the MEF3 element in the myogenin promoter, and in the IGFBP5 promoter. Thought to be regulated by association with Dach and Eya proteins, and seems to be coactivated by EYA1, EYA2 and EYA3. This Homo sapiens (Human) protein is Homeobox protein SIX5 (SIX5).